The sequence spans 254 residues: E3 ubiquitin-protein ligase NEURL3 (254 aa).

The NHR domain occupies 17–174 (ALSFHGNATG…TTKAIELLDP (158 aa)). Residues 197–236 (CVICFHNTANTRLMPCGHSHFCGSCAWHIFKDTARCPICR) form an RING-type zinc finger.

As to expression, expressed in alveolar epithelial type II cells.

The protein localises to the cytoplasm. The catalysed reaction is S-ubiquitinyl-[E2 ubiquitin-conjugating enzyme]-L-cysteine + [acceptor protein]-L-lysine = [E2 ubiquitin-conjugating enzyme]-L-cysteine + N(6)-ubiquitinyl-[acceptor protein]-L-lysine.. It functions in the pathway protein modification; protein ubiquitination. Functionally, E3 ubiquitin-protein ligase that plays a role in various biological processes such as lung development or innate immunity. Seems to utilize UBE2E1. Promotes innate antiviral response by catalyzing 'Lys-63'-linked ubiquitination of IRF7. Plays an essential role in TLR4-mediated activation of MAPK pathways by promoting 'Lys-48'-linked polyubiquitination of the phosphatase DUSP1/MKP1. In Mus musculus (Mouse), this protein is E3 ubiquitin-protein ligase NEURL3 (Neurl3).